We begin with the raw amino-acid sequence, 504 residues long: D-alanine--D-alanyl carrier protein ligase (504 aa).

Threonine 152–serine 153 is an ATP binding site. A D-alanine-binding site is contributed by aspartate 197. Residue asparagine 292 to threonine 297 coordinates ATP. Valine 301 contacts D-alanine. ATP contacts are provided by residues aspartate 383, tyrosine 394–arginine 397, and lysine 492. Lysine 492 is a binding site for D-alanine.

It belongs to the ATP-dependent AMP-binding enzyme family. DltA subfamily.

The protein resides in the cytoplasm. It catalyses the reaction holo-[D-alanyl-carrier protein] + D-alanine + ATP = D-alanyl-[D-alanyl-carrier protein] + AMP + diphosphate. The protein operates within cell wall biogenesis; lipoteichoic acid biosynthesis. Functionally, catalyzes the first step in the D-alanylation of lipoteichoic acid (LTA), the activation of D-alanine and its transfer onto the D-alanyl carrier protein (Dcp) DltC. In an ATP-dependent two-step reaction, forms a high energy D-alanyl-AMP intermediate, followed by transfer of the D-alanyl residue as a thiol ester to the phosphopantheinyl prosthetic group of the Dcp. D-alanylation of LTA plays an important role in modulating the properties of the cell wall in Gram-positive bacteria, influencing the net charge of the cell wall. This chain is D-alanine--D-alanyl carrier protein ligase, found in Bacillus thuringiensis (strain Al Hakam).